Consider the following 79-residue polypeptide: Sec-independent protein translocase protein TatA (79 aa).

The helical transmembrane segment at 1–21 (MGGISIWQLLIILVIVVLLFG) threads the bilayer. Residues 45–79 (EEEKDADFEQKKQVEEKSAAEPVSTETQSDVKEKS) are disordered. Residues 51 to 63 (DFEQKKQVEEKSA) are compositionally biased toward basic and acidic residues.

It belongs to the TatA/E family. As to quaternary structure, the Tat system comprises two distinct complexes: a TatABC complex, containing multiple copies of TatA, TatB and TatC subunits, and a separate TatA complex, containing only TatA subunits. Substrates initially bind to the TatABC complex, which probably triggers association of the separate TatA complex to form the active translocon.

The protein localises to the cell inner membrane. Functionally, part of the twin-arginine translocation (Tat) system that transports large folded proteins containing a characteristic twin-arginine motif in their signal peptide across membranes. TatA could form the protein-conducting channel of the Tat system. In Alteromonas mediterranea (strain DSM 17117 / CIP 110805 / LMG 28347 / Deep ecotype), this protein is Sec-independent protein translocase protein TatA.